A 420-amino-acid chain; its full sequence is MNLLVVGSGGREHAISKKLLESNNVEKVYCAPGNDGMRLDDIQLVAISETDKVGLIDFAKKADVSFVIVGPEVPLLEGVVDAFEEAGIKAFGPKANAALIEGSKDFAKQFMEKYAIPTAASRTFTDYAEAKAYLDERGVPIVIKADGLAAGKGVTVALEMEEAVLALKDMMLEEKFGDASLKVVIEDFLAGEEFSLMAFVNGEEVYPMAIAQDHKRAYEGDKGPNTGGMGAYSPVPHISEDVVNEAVEKILRPAAKGMVQEDRYFRGILYAGLILTTEGPKVIEFNARFGDPETQVVLPRLESDFAALIAALLNNEKPEVRFKKEGITLGVVLASAGYPEHYEKGNKLTGLNDIREDVAIYHAGTKQNENGEFVSSGGRVLLLAKEAETMSDARTLLYPEMQKLDNPNFFYRMDIGTKAE.

Residues 108-314 (KQFMEKYAIP…FAALIAALLN (207 aa)) enclose the ATP-grasp domain. Residue 134–195 (LDERGVPIVI…EDFLAGEEFS (62 aa)) participates in ATP binding. Mg(2+) is bound by residues glutamate 284 and asparagine 286.

Belongs to the GARS family. Mg(2+) is required as a cofactor. Mn(2+) serves as cofactor.

It carries out the reaction 5-phospho-beta-D-ribosylamine + glycine + ATP = N(1)-(5-phospho-beta-D-ribosyl)glycinamide + ADP + phosphate + H(+). It participates in purine metabolism; IMP biosynthesis via de novo pathway; N(1)-(5-phospho-D-ribosyl)glycinamide from 5-phospho-alpha-D-ribose 1-diphosphate: step 2/2. In Listeria innocua serovar 6a (strain ATCC BAA-680 / CLIP 11262), this protein is Phosphoribosylamine--glycine ligase.